We begin with the raw amino-acid sequence, 455 residues long: Probable glycine dehydrogenase (decarboxylating) subunit 1 (455 aa).

Belongs to the GcvP family. N-terminal subunit subfamily. The glycine cleavage system is composed of four proteins: P, T, L and H. In this organism, the P 'protein' is a heterodimer of two subunits.

It carries out the reaction N(6)-[(R)-lipoyl]-L-lysyl-[glycine-cleavage complex H protein] + glycine + H(+) = N(6)-[(R)-S(8)-aminomethyldihydrolipoyl]-L-lysyl-[glycine-cleavage complex H protein] + CO2. Its function is as follows. The glycine cleavage system catalyzes the degradation of glycine. The P protein binds the alpha-amino group of glycine through its pyridoxal phosphate cofactor; CO(2) is released and the remaining methylamine moiety is then transferred to the lipoamide cofactor of the H protein. The sequence is that of Probable glycine dehydrogenase (decarboxylating) subunit 1 from Francisella tularensis subsp. novicida (strain U112).